The following is a 955-amino-acid chain: Reversion-inducing cysteine-rich protein with Kazal motifs (955 aa).

A signal peptide spans 1–22; the sequence is MSGCLQILTVLLCCRFWALVFS. The stretch at 28-75 is one Knot 1 repeat; that stretch reads CVHHAADIPRCRDACEQLASIRSESRLRHLLHRLPSYCPETLSELWIC. The segment at 28 to 326 is 5 X Knot repeats; that stretch reads CVHHAADIPR…NPVEMDLITC (299 aa). N-linked (GlcNAc...) asparagine glycosylation occurs at Asn77. 2 Knot repeats span residues 95–132 and 142–188; these read CCEL…LYSC and CCSY…LILC. Asn191 is a glycosylation site (N-linked (GlcNAc...) asparagine). Knot repeat units follow at residues 207-254 and 282-326; these read CCDR…LWQC and CCFK…LITC. 2 N-linked (GlcNAc...) asparagine glycosylation sites follow: Asn287 and Asn375. Kazal-like domains follow at residues 615–661, 686–741, and 742–778; these read LFTG…SCRS, DLSE…HCQD, and ACRR…RCHA. 5 cysteine pairs are disulfide-bonded: Cys621–Cys646, Cys623–Cys642, Cys631–Cys659, Cys704–Cys724, and Cys713–Cys739. Ser931 is lipidated: GPI-anchor amidated serine. Positions 932–955 are excised as a propeptide; sequence SCVSISVCVLLLLCSLILTLTSDL.

Belongs to the RECK family. Interacts (via knot repeats) with wnt7a (via disordered linker region); the interaction is direct. Interacts (via knot repeats) with wnt7b (via disordered linker region); the interaction is direct. Interacts with adgra2; the interaction is direct. As to expression, expressed in the cerebral endothelium.

Its subcellular location is the cell membrane. Functionally, functions together with adgra2 to enable brain endothelial cells to selectively respond to Wnt7 signals (wnt7a or wnt7b). Plays a key role in Wnt7-specific responses: required for central nervous system (CNS) angiogenesis and blood-brain barrier regulation. Acts as a Wnt7-specific coactivator of canonical Wnt signaling by decoding Wnt ligands: acts by interacting specifically with the disordered linker region of Wnt7, thereby conferring ligand selectivity for Wnt7. Adgra2 is then required to deliver reck-bound Wnt7 to frizzled by assembling a higher-order RECK-ADGRA2-Fzd-LRP5-LRP6 complex. Also acts as a serine protease inhibitor. This chain is Reversion-inducing cysteine-rich protein with Kazal motifs, found in Danio rerio (Zebrafish).